A 361-amino-acid polypeptide reads, in one-letter code: Phosphoserine aminotransferase (361 aa).

Residue R43 coordinates L-glutamate. Residues 77-78 (AS), W103, T153, D173, and Q196 contribute to the pyridoxal 5'-phosphate site. At K197 the chain carries N6-(pyridoxal phosphate)lysine. Pyridoxal 5'-phosphate is bound at residue 238-239 (NT).

Belongs to the class-V pyridoxal-phosphate-dependent aminotransferase family. SerC subfamily. In terms of assembly, homodimer. The cofactor is pyridoxal 5'-phosphate.

The protein localises to the cytoplasm. It catalyses the reaction O-phospho-L-serine + 2-oxoglutarate = 3-phosphooxypyruvate + L-glutamate. It carries out the reaction 4-(phosphooxy)-L-threonine + 2-oxoglutarate = (R)-3-hydroxy-2-oxo-4-phosphooxybutanoate + L-glutamate. It participates in amino-acid biosynthesis; L-serine biosynthesis; L-serine from 3-phospho-D-glycerate: step 2/3. Its pathway is cofactor biosynthesis; pyridoxine 5'-phosphate biosynthesis; pyridoxine 5'-phosphate from D-erythrose 4-phosphate: step 3/5. Its function is as follows. Catalyzes the reversible conversion of 3-phosphohydroxypyruvate to phosphoserine and of 3-hydroxy-2-oxo-4-phosphonooxybutanoate to phosphohydroxythreonine. The polypeptide is Phosphoserine aminotransferase (Pseudomonas syringae pv. syringae (strain B728a)).